Consider the following 529-residue polypeptide: Polygalacturonase (529 aa).

Positions 1 to 21 (MNHRYTLLALAAAALSAGAHA) are cleaved as a signal peptide. Residue Asp305 is the Proton donor of the active site. His331 is a catalytic residue. Residues 516–529 (AFVPLKSVAPTSPI) are required for PGA export across the outer membrane and catalytic activity.

The protein belongs to the glycosyl hydrolase 28 family. As to quaternary structure, monomer.

The protein localises to the secreted. The catalysed reaction is (1,4-alpha-D-galacturonosyl)n+m + H2O = (1,4-alpha-D-galacturonosyl)n + (1,4-alpha-D-galacturonosyl)m.. Functionally, contributes to the wilt disease production on tomato. The protein is Polygalacturonase (pglA) of Ralstonia solanacearum (Pseudomonas solanacearum).